Consider the following 581-residue polypeptide: Chaotic nuclear migration protein 67 (581 aa).

Ser17, Ser20, Ser72, Ser85, and Ser89 each carry phosphoserine. The tract at residues 86 to 150 (YQESPGLQER…PTDEHTSPDI (65 aa)) is disordered. The span at 94-114 (ERPKNEKDKSPIGTDVHKKDV) shows a compositional bias: basic and acidic residues. Phosphoserine is present on Ser151. Coiled-coil stretches lie at residues 179-252 (LGYQ…DTIQ), 306-363 (FLCA…LSKQ), and 373-451 (KLTI…NTSE).

As to quaternary structure, interacts directly with ADY3 and YOR129C. Interacts with ADY4. Probable component of a SPB complex composed of ADY3, SSP1, DON1, MPC54, SPO21/MPC70, NUD1 and CNM67. Post-translationally, phosphorylated in its N-terminal part.

The protein resides in the cytoplasm. It localises to the cytoskeleton. It is found in the microtubule organizing center. The protein localises to the spindle pole body. Involved in the pathway that organizes the shaping and sizing of the prospore membrane (PSM) during sporulation. Required for the proper formation of the spindle pole body (SPB) outer plaque. May connect the outer plaque to the central plaque embedded in the nuclear envelope. This Saccharomyces cerevisiae (strain ATCC 204508 / S288c) (Baker's yeast) protein is Chaotic nuclear migration protein 67 (CNM67).